Consider the following 260-residue polypeptide: Thiazole synthase (260 aa).

K96 functions as the Schiff-base intermediate with DXP in the catalytic mechanism. 1-deoxy-D-xylulose 5-phosphate contacts are provided by residues G157, 184–185 (AG), and 206–207 (NT).

The protein belongs to the ThiG family. As to quaternary structure, homotetramer. Forms heterodimers with either ThiH or ThiS.

The protein resides in the cytoplasm. The catalysed reaction is [ThiS sulfur-carrier protein]-C-terminal-Gly-aminoethanethioate + 2-iminoacetate + 1-deoxy-D-xylulose 5-phosphate = [ThiS sulfur-carrier protein]-C-terminal Gly-Gly + 2-[(2R,5Z)-2-carboxy-4-methylthiazol-5(2H)-ylidene]ethyl phosphate + 2 H2O + H(+). It functions in the pathway cofactor biosynthesis; thiamine diphosphate biosynthesis. Catalyzes the rearrangement of 1-deoxy-D-xylulose 5-phosphate (DXP) to produce the thiazole phosphate moiety of thiamine. Sulfur is provided by the thiocarboxylate moiety of the carrier protein ThiS. In vitro, sulfur can be provided by H(2)S. This Rhodopseudomonas palustris (strain ATCC BAA-98 / CGA009) protein is Thiazole synthase.